The sequence spans 323 residues: tRNA-dihydrouridine(20/20a) synthase (323 aa).

FMN is bound by residues Pro14–Leu16 and Gln66. Catalysis depends on Cys96, which acts as the Proton donor. Residues Lys135, His166, Asn206–Gly208, and Gly228–Arg229 contribute to the FMN site.

This sequence belongs to the Dus family. DusA subfamily. FMN serves as cofactor.

The enzyme catalyses 5,6-dihydrouridine(20) in tRNA + NADP(+) = uridine(20) in tRNA + NADPH + H(+). It catalyses the reaction 5,6-dihydrouridine(20) in tRNA + NAD(+) = uridine(20) in tRNA + NADH + H(+). The catalysed reaction is 5,6-dihydrouridine(20a) in tRNA + NADP(+) = uridine(20a) in tRNA + NADPH + H(+). It carries out the reaction 5,6-dihydrouridine(20a) in tRNA + NAD(+) = uridine(20a) in tRNA + NADH + H(+). In terms of biological role, catalyzes the synthesis of 5,6-dihydrouridine (D), a modified base found in the D-loop of most tRNAs, via the reduction of the C5-C6 double bond in target uridines. Specifically modifies U20 and U20a in tRNAs. In Haemophilus ducreyi (strain 35000HP / ATCC 700724), this protein is tRNA-dihydrouridine(20/20a) synthase.